Here is a 581-residue protein sequence, read N- to C-terminus: Arginine--tRNA ligase (581 aa).

The short motif at 126–136 is the 'HIGH' region element; sequence PNLAKEMHVGH.

The protein belongs to the class-I aminoacyl-tRNA synthetase family. Monomer.

Its subcellular location is the cytoplasm. The enzyme catalyses tRNA(Arg) + L-arginine + ATP = L-arginyl-tRNA(Arg) + AMP + diphosphate. In Shewanella frigidimarina (strain NCIMB 400), this protein is Arginine--tRNA ligase.